Here is a 357-residue protein sequence, read N- to C-terminus: Putative RING-H2 finger protein ATL37 (357 aa).

The N-terminal stretch at 1 to 31 is a signal peptide; sequence MTIFTRDFSHRILACVLLPLFLFQCLPYVTC. Residues 47-67 traverse the membrane as a helical segment; that stretch reads SSIIGIVLLSLFLLLLVVYCL. An RING-type; atypical zinc finger spans residues 120-162; it reads CAICLCEFEDEEPLRWMPPCSHTFHANCIDEWLSSRSTCPVCR. The interval 172 to 210 is disordered; it reads SFPHPSMDVETGNAQRGVQESPDERSLTGSSVTCNNNAN. Positions 198–210 are enriched in polar residues; the sequence is LTGSSVTCNNNAN. The residue at position 273 (Ser273) is a Phosphoserine. Disordered stretches follow at residues 281 to 304 and 327 to 357; these read RSSR…QGRQ and LDRD…PEKN. Positions 283-304 are enriched in polar residues; it reads SRQGYRSGSVGNERTGFSQGRQ. The segment covering 340–357 has biased composition (basic and acidic residues); sequence NDKDFGERSFQRLMPEKN.

The protein belongs to the RING-type zinc finger family. ATL subfamily.

It is found in the membrane. It catalyses the reaction S-ubiquitinyl-[E2 ubiquitin-conjugating enzyme]-L-cysteine + [acceptor protein]-L-lysine = [E2 ubiquitin-conjugating enzyme]-L-cysteine + N(6)-ubiquitinyl-[acceptor protein]-L-lysine.. The protein operates within protein modification; protein ubiquitination. The chain is Putative RING-H2 finger protein ATL37 (ATL37) from Arabidopsis thaliana (Mouse-ear cress).